The chain runs to 192 residues: Xanthine phosphoribosyltransferase (192 aa).

The xanthine site is built by Leu20 and Asn27. Position 128–132 (128–132 (AHGEA)) interacts with 5-phospho-alpha-D-ribose 1-diphosphate. Position 156 (Lys156) interacts with xanthine.

This sequence belongs to the purine/pyrimidine phosphoribosyltransferase family. Xpt subfamily. In terms of assembly, homodimer.

Its subcellular location is the cytoplasm. The catalysed reaction is XMP + diphosphate = xanthine + 5-phospho-alpha-D-ribose 1-diphosphate. The protein operates within purine metabolism; XMP biosynthesis via salvage pathway; XMP from xanthine: step 1/1. In terms of biological role, converts the preformed base xanthine, a product of nucleic acid breakdown, to xanthosine 5'-monophosphate (XMP), so it can be reused for RNA or DNA synthesis. In Lactobacillus acidophilus (strain ATCC 700396 / NCK56 / N2 / NCFM), this protein is Xanthine phosphoribosyltransferase.